Here is a 615-residue protein sequence, read N- to C-terminus: 1-deoxy-D-xylulose-5-phosphate synthase (615 aa).

Thiamine diphosphate-binding positions include histidine 72 and 111-113 (GHS). Aspartate 142 is a binding site for Mg(2+). Residues 143–144 (GA), asparagine 171, tyrosine 278, and glutamate 360 contribute to the thiamine diphosphate site. Mg(2+) is bound at residue asparagine 171.

This sequence belongs to the transketolase family. DXPS subfamily. In terms of assembly, homodimer. Mg(2+) serves as cofactor. It depends on thiamine diphosphate as a cofactor.

The enzyme catalyses D-glyceraldehyde 3-phosphate + pyruvate + H(+) = 1-deoxy-D-xylulose 5-phosphate + CO2. The protein operates within metabolic intermediate biosynthesis; 1-deoxy-D-xylulose 5-phosphate biosynthesis; 1-deoxy-D-xylulose 5-phosphate from D-glyceraldehyde 3-phosphate and pyruvate: step 1/1. Catalyzes the acyloin condensation reaction between C atoms 2 and 3 of pyruvate and glyceraldehyde 3-phosphate to yield 1-deoxy-D-xylulose-5-phosphate (DXP). This Campylobacter jejuni subsp. jejuni serotype O:6 (strain 81116 / NCTC 11828) protein is 1-deoxy-D-xylulose-5-phosphate synthase.